The sequence spans 576 residues: Probable vesicular glutamate transporter eat-4 (576 aa).

Over methionine 1 to arginine 69 the chain is Cytoplasmic. The segment at alanine 25–proline 46 is disordered. Over residues glutamine 36–proline 46 the composition is skewed to polar residues. The chain crosses the membrane as a helical span at residues tryptophan 70–phenylalanine 90. At glycine 91 to serine 121 the chain is on the extracellular side. N-linked (GlcNAc...) asparagine glycosylation is found at asparagine 100 and asparagine 114. A helical transmembrane segment spans residues valine 122 to alanine 142. Residues alanine 143–leucine 150 lie on the Cytoplasmic side of the membrane. Residues phenylalanine 151–valine 171 form a helical membrane-spanning segment. The Extracellular segment spans residues lysine 172–aspartate 174. A helical transmembrane segment spans residues tyrosine 175–methionine 195. Topologically, residues histidine 196–threonine 213 are cytoplasmic. A helical membrane pass occupies residues threonine 214 to valine 234. The Extracellular portion of the chain corresponds to serine 235–tryptophan 239. Residues alanine 240 to valine 260 traverse the membrane as a helical segment. Topologically, residues threonine 261–lysine 305 are cytoplasmic. A helical membrane pass occupies residues proline 306–leucine 325. Residues glutamine 326–glycine 344 lie on the Extracellular side of the membrane. Residues leucine 345–alanine 365 traverse the membrane as a helical segment. Residues aspartate 366–lysine 381 are Cytoplasmic-facing. Residues isoleucine 382–threonine 402 form a helical membrane-spanning segment. The Extracellular segment spans residues serine 403–threonine 406. Residues alanine 407 to valine 427 form a helical membrane-spanning segment. Over asparagine 428–alanine 437 the chain is Cytoplasmic. Residues alanine 438–valine 458 traverse the membrane as a helical segment. Topologically, residues threonine 459–threonine 471 are extracellular. Residues serine 472–alanine 492 traverse the membrane as a helical segment. The Cytoplasmic segment spans residues serine 493 to tryptophan 576.

It belongs to the major facilitator superfamily. Sodium/anion cotransporter family. VGLUT subfamily. In terms of tissue distribution, expressed in neurons of the pharynx and the extrapharyngeal nervous system. Highly expressed in male PHC sensory neurons.

The protein resides in the cell membrane. It localises to the synapse. Its function is as follows. Required for glutamatergic synaptic transmission. In AWB and AWC sensory neurons, required for the detection of preferred food sources, probably via glutamatergic neurotransmission from sensory neurons. Negatively regulates the turning step of male mating behavior. The protein is Probable vesicular glutamate transporter eat-4 of Caenorhabditis elegans.